A 65-amino-acid chain; its full sequence is Large ribosomal subunit protein bL31 (65 aa).

Residues C16, C18, C36, and C39 each coordinate Zn(2+).

The protein belongs to the bacterial ribosomal protein bL31 family. Type A subfamily. Part of the 50S ribosomal subunit. The cofactor is Zn(2+).

Binds the 23S rRNA. This Geotalea uraniireducens (strain Rf4) (Geobacter uraniireducens) protein is Large ribosomal subunit protein bL31.